Consider the following 503-residue polypeptide: UPF0522 protein C (503 aa).

The signal sequence occupies residues 1 to 18; sequence MKLFILIILSICLALVNS. N-linked (GlcNAc...) asparagine glycans are attached at residues Asn330, Asn337, and Asn370.

It belongs to the UPF0522 family.

The protein resides in the secreted. In Dictyostelium discoideum (Social amoeba), this protein is UPF0522 protein C.